Here is an 82-residue protein sequence, read N- to C-terminus: DNA-directed RNA polymerase subunit Rpo5 (82 aa).

It belongs to the archaeal Rpo5/eukaryotic RPB5 RNA polymerase subunit family. Part of the RNA polymerase complex.

It is found in the cytoplasm. It catalyses the reaction RNA(n) + a ribonucleoside 5'-triphosphate = RNA(n+1) + diphosphate. DNA-dependent RNA polymerase (RNAP) catalyzes the transcription of DNA into RNA using the four ribonucleoside triphosphates as substrates. The polypeptide is DNA-directed RNA polymerase subunit Rpo5 (Thermococcus kodakarensis (strain ATCC BAA-918 / JCM 12380 / KOD1) (Pyrococcus kodakaraensis (strain KOD1))).